The following is a 91-amino-acid chain: Probable Fe(2+)-trafficking protein (91 aa).

This sequence belongs to the Fe(2+)-trafficking protein family.

In terms of biological role, could be a mediator in iron transactions between iron acquisition and iron-requiring processes, such as synthesis and/or repair of Fe-S clusters in biosynthetic enzymes. The chain is Probable Fe(2+)-trafficking protein from Cupriavidus metallidurans (strain ATCC 43123 / DSM 2839 / NBRC 102507 / CH34) (Ralstonia metallidurans).